Consider the following 253-residue polypeptide: tRNA pseudouridine synthase A (253 aa).

Catalysis depends on aspartate 52, which acts as the Nucleophile. A substrate-binding site is contributed by tyrosine 110.

This sequence belongs to the tRNA pseudouridine synthase TruA family. In terms of assembly, homodimer.

It catalyses the reaction uridine(38/39/40) in tRNA = pseudouridine(38/39/40) in tRNA. Its function is as follows. Formation of pseudouridine at positions 38, 39 and 40 in the anticodon stem and loop of transfer RNAs. This Thermus thermophilus (strain ATCC BAA-163 / DSM 7039 / HB27) protein is tRNA pseudouridine synthase A.